We begin with the raw amino-acid sequence, 500 residues long: Guanosine-5'-triphosphate,3'-diphosphate pyrophosphatase (500 aa).

The protein belongs to the GppA/Ppx family. GppA subfamily.

It carries out the reaction guanosine 3'-diphosphate 5'-triphosphate + H2O = guanosine 3',5'-bis(diphosphate) + phosphate + H(+). Its pathway is purine metabolism; ppGpp biosynthesis; ppGpp from GTP: step 2/2. Catalyzes the conversion of pppGpp to ppGpp. Guanosine pentaphosphate (pppGpp) is a cytoplasmic signaling molecule which together with ppGpp controls the 'stringent response', an adaptive process that allows bacteria to respond to amino acid starvation, resulting in the coordinated regulation of numerous cellular activities. In Photorhabdus laumondii subsp. laumondii (strain DSM 15139 / CIP 105565 / TT01) (Photorhabdus luminescens subsp. laumondii), this protein is Guanosine-5'-triphosphate,3'-diphosphate pyrophosphatase.